The primary structure comprises 204 residues: MSRIVLASNNAKKLVELRRTFEGADTEVEIVGLSEVSDAPAPEETGRTFVENALIKARAAAHETGLPALADDSGLEVDALNRMPGIRSARWSGPHAHDERNLQLLLDQTFDLPDERRHGRFVCAMAFVDPDGTEITKVATMEGRIISEARGKNGFGYDPMFVPDAQPGDLTSAEMTPEVKDAISHRGQAVRAIVPAVVAHLEGR.

Position 8 to 13 (serine 8 to lysine 13) interacts with substrate. Mg(2+) is bound by residues glutamate 43 and aspartate 72. Aspartate 72 serves as the catalytic Proton acceptor. Substrate is bound by residues serine 73, phenylalanine 155–aspartate 158, lysine 180, and histidine 185–arginine 186.

Belongs to the HAM1 NTPase family. As to quaternary structure, homodimer. The cofactor is Mg(2+).

It catalyses the reaction XTP + H2O = XMP + diphosphate + H(+). The catalysed reaction is dITP + H2O = dIMP + diphosphate + H(+). It carries out the reaction ITP + H2O = IMP + diphosphate + H(+). In terms of biological role, pyrophosphatase that catalyzes the hydrolysis of nucleoside triphosphates to their monophosphate derivatives, with a high preference for the non-canonical purine nucleotides XTP (xanthosine triphosphate), dITP (deoxyinosine triphosphate) and ITP. Seems to function as a house-cleaning enzyme that removes non-canonical purine nucleotides from the nucleotide pool, thus preventing their incorporation into DNA/RNA and avoiding chromosomal lesions. The polypeptide is dITP/XTP pyrophosphatase (Cutibacterium acnes (strain DSM 16379 / KPA171202) (Propionibacterium acnes)).